Consider the following 245-residue polypeptide: 1-(5-phosphoribosyl)-5-[(5-phosphoribosylamino)methylideneamino] imidazole-4-carboxamide isomerase (245 aa).

D7 (proton acceptor) is an active-site residue. The Proton donor role is filled by D129.

The protein belongs to the HisA/HisF family.

It localises to the cytoplasm. It carries out the reaction 1-(5-phospho-beta-D-ribosyl)-5-[(5-phospho-beta-D-ribosylamino)methylideneamino]imidazole-4-carboxamide = 5-[(5-phospho-1-deoxy-D-ribulos-1-ylimino)methylamino]-1-(5-phospho-beta-D-ribosyl)imidazole-4-carboxamide. The protein operates within amino-acid biosynthesis; L-histidine biosynthesis; L-histidine from 5-phospho-alpha-D-ribose 1-diphosphate: step 4/9. The chain is 1-(5-phosphoribosyl)-5-[(5-phosphoribosylamino)methylideneamino] imidazole-4-carboxamide isomerase from Citrobacter koseri (strain ATCC BAA-895 / CDC 4225-83 / SGSC4696).